The following is an 820-amino-acid chain: Probable ATP-dependent RNA helicase DDX23 (820 aa).

The span at 1-42 (MAGELADKKDRDASPSKEERKRSRTPDRERDRDRDRKSSPSK) shows a compositional bias: basic and acidic residues. The segment at 1 to 244 (MAGELADKKD…QKIREEKDKS (244 aa)) is disordered. 2 positions are modified to phosphoserine: Ser-14 and Ser-16. The segment covering 43–65 (DRKRHRSRDRRRGGSRSRSRSRS) has biased composition (basic residues). Basic and acidic residues predominate over residues 66–105 (KSAERERRHKERERDKERDRNKKDRDRDKDGHRRDKDRKR). Residues Ser-107 and Ser-109 each carry the phosphoserine modification. Composition is skewed to basic and acidic residues over residues 112–137 (RGKD…DKKP), 147–226 (LLAK…RETN), and 233–244 (GRQKIREEKDKS). The Q motif motif lies at 391 to 419 (RSWKDSSLPPHILEVIDKCGYKEPTPIQR). Positions 422–627 (IPIGLQNRDI…RSYLRRPAVV (206 aa)) constitute a Helicase ATP-binding domain. Residue 435–442 (AETGSGKT) participates in ATP binding. The DEAD box motif lies at 549–552 (DEAD). The region spanning 651 to 799 (KRKKLLAILE…SCPPELANHP (149 aa)) is the Helicase C-terminal domain. Residues Lys-686 and Lys-811 each participate in a glycyl lysine isopeptide (Lys-Gly) (interchain with G-Cter in SUMO2) cross-link.

It belongs to the DEAD box helicase family. DDX23/PRP28 subfamily. As to quaternary structure, the phosphorylated form (by SRPK2) is a component of the U4/U6-U5 tri-snRNP complex composed of the U4, U6 and U5 snRNAs and at least PRPF3, PRPF4, PRPF6, PRPF8, PRPF31, SNRNP200, TXNL4A, WDR57, SNRNP40, DDX23, CD2BP2, PPIH, SNU13, EFTUD2, SART1 and USP39. Identified in the spliceosome C complex. Interacts with ERBB4. Interacts with ERCC6. In vitro phosphorylated by CLK1 and U1 snRNP-associated protein kinase. Phosphorylated by SRPK2 and this phosphorylation is required for its association with the tri-snRNP (U4/U6-U5 tri-small nuclear ribonucleoproteins) and subsequent spliceosomal B complex formation. May be phosphorylated by SRPK2 on Ser residues in the SR domain; the phosphorylation is required for the removal of inappropriate R-loops during transcription.

It is found in the nucleus. Its subcellular location is the chromosome. It carries out the reaction ATP + H2O = ADP + phosphate + H(+). Functionally, involved in pre-mRNA splicing and its phosphorylated form (by SRPK2) is required for spliceosomal B complex formation. Independently of its spliceosome formation function, required for the suppression of incorrect R-loops formed during transcription; R-loops are composed of a DNA:RNA hybrid and the associated non-template single-stranded DNA. The sequence is that of Probable ATP-dependent RNA helicase DDX23 from Pongo abelii (Sumatran orangutan).